The primary structure comprises 997 residues: Synaptonemal complex protein 1 (997 aa).

The Mediates head to head self-assembly of N-terminal ends motif lies at 102 to 112; it reads PMSRLYSKLYK. The short motif at 118 to 121 is the Nuclear localization signal element; sequence KKWK. 2 coiled-coil regions span residues 121 to 176 and 212 to 696; these read KVSI…LIKE and YVDL…KKIS. The interaction with SYCE3 stretch occupies residues 207-363; that stretch reads ETRQVYVDLN…YQLTEEKEAQ (157 aa). Residues 698–792 form a required for pH-induced assembly of C-terminal ends into antiparallel tetramers region; that stretch reads EKLLGEVEKA…VSLKKQLEVE (95 aa). A Nuclear localization signal motif is present at residues 701 to 704; that stretch reads LGEV. A coiled-coil region spans residues 768 to 806; that stretch reads KVALETELSNIRNELVSLKKQLEVEKEEKEKLKMEQENT. Residues 805-997 are DNA-binding; the sequence is NTAILTDKKD…RLKEAEKLFT (193 aa). Residue serine 824 is modified to Phosphoserine. Residues 828 to 863 are disordered; sequence TSWKFDSKTTPSQNISRLSSSMDSGKSKDNRDSLRA. Over residues 835–851 the composition is skewed to polar residues; sequence KTTPSQNISRLSSSMDS. Positions 852–861 are enriched in basic and acidic residues; it reads GKSKDNRDSL. Residues 902-905 carry the Nuclear localization signal motif; it reads KKRK. Phosphothreonine is present on threonine 940.

As to quaternary structure, structural component of synaptonemal complexes. Homotetramer that consists of an N-terminal four-helical bundle that bifurcates into two elongated C-terminal dimeric coiled coils. This tetrameric building block potentially self-assembles into a supramolecular zipper-like lattice to mediate meiotic chromosome synapsis. Self-assembly is likely initiated by local proton density at chromosome axis, which is predicted to trigger antiparallel back to back assembly of adjacent C-terminal ends into tetrameric structures that anchor to chromosomal DNA. Then the N-terminal ends are predicted to undergo cooperative antiparallel head to head assembly at the midline of synaptonemal complexes central element to form a zipper-like lattice between properly aligned homologous chromosomes. The nascent synapsis generated by SYCP1 is stabilized through interaction with central element proteins SYCE1 and SYCE2. Interacts (via tetrameric core) with SYCE3; the interaction remodels SYCP1 homotetramers to 2:1 heterotrimers with SYCE3. SYCP1/SYCE3 heterotrimers form lattice assemblies as part of the mature synaptonemal complex via both lateral and head-to-head interactions. Forms a complex with EWSR1, PRDM9, SYCP3 and REC8; complex formation is dependent of phosphorylated form of REC8 and requires PRDM9 bound to hotspot DNA; EWSR1 joins PRDM9 with the chromosomal axis through REC8. Interacts with SPO16. Testis.

Its subcellular location is the nucleus. It localises to the chromosome. The protein resides in the centromere. Functionally, major component of the transverse filaments of synaptonemal complexes, formed between homologous chromosomes during meiotic prophase. Required for normal assembly of the central element of the synaptonemal complexes. Required for normal centromere pairing during meiosis. Required for normal meiotic chromosome synapsis during oocyte and spermatocyte development and for normal male and female fertility. The chain is Synaptonemal complex protein 1 from Rattus norvegicus (Rat).